The following is a 269-amino-acid chain: Troponin I (269 aa).

Residues 1 to 104 (MADDEKKAAA…AKKGFMTPER (104 aa)) form a disordered region. Residue Ala-2 is modified to N-acetylalanine. Residues 9 to 50 (AAPAAAPAAAAKPAAPAAAPAANGKAAPAANGKAAPAAAAAP) show a composition bias toward low complexity. Over residues 56–91 (DPNDPKVKAEEAKKAKQAEIERKRAEVRKRMEEASK) the composition is skewed to basic and acidic residues. The interval 162 to 171 (ERMYICEGQK) is troponin T-interaction. Positions 189–202 (NAQVNDLRGKFVKP) are actin-binding. 2 positions are modified to N6,N6,N6-trimethyllysine: Lys-201 and Lys-205. The segment at 239 to 269 (TLEEEEKEKKPDWSKGKPGDAKVKEEVEAEA) is disordered.

The protein belongs to the troponin I family. Binds to actin and tropomyosin. As to expression, all isoforms are expressed in somatic muscle. Isoforms containing exon 6a1 (isoforms 1 and 2) are expressed in all muscles but highest expression is in abdominal muscle and splanchnic muscle of the gut. Isoforms containing exon 6b1 (isoforms 5, 6, 9 and 10) are highly expressed in the tergal depressor of trochanter (TDT) muscle.

Its function is as follows. Troponin I is the ATPase inhibitory subunit of troponin in the thin filament regulatory complex. Involved in the development and maintenance of muscle and nervous system. May also be involved in the cytoskeletal apparatus. This chain is Troponin I (wupA), found in Drosophila melanogaster (Fruit fly).